Reading from the N-terminus, the 251-residue chain is Imidazole glycerol phosphate synthase subunit HisF (251 aa).

Residues Asp11 and Asp130 contribute to the active site.

The protein belongs to the HisA/HisF family. Heterodimer of HisH and HisF.

Its subcellular location is the cytoplasm. It catalyses the reaction 5-[(5-phospho-1-deoxy-D-ribulos-1-ylimino)methylamino]-1-(5-phospho-beta-D-ribosyl)imidazole-4-carboxamide + L-glutamine = D-erythro-1-(imidazol-4-yl)glycerol 3-phosphate + 5-amino-1-(5-phospho-beta-D-ribosyl)imidazole-4-carboxamide + L-glutamate + H(+). Its pathway is amino-acid biosynthesis; L-histidine biosynthesis; L-histidine from 5-phospho-alpha-D-ribose 1-diphosphate: step 5/9. In terms of biological role, IGPS catalyzes the conversion of PRFAR and glutamine to IGP, AICAR and glutamate. The HisF subunit catalyzes the cyclization activity that produces IGP and AICAR from PRFAR using the ammonia provided by the HisH subunit. The polypeptide is Imidazole glycerol phosphate synthase subunit HisF (Chlorobium phaeobacteroides (strain DSM 266 / SMG 266 / 2430)).